Consider the following 411-residue polypeptide: Serine hydroxymethyltransferase (411 aa).

(6S)-5,6,7,8-tetrahydrofolate contacts are provided by residues Leu-119 and 123-125 (GHL). N6-(pyridoxal phosphate)lysine is present on Lys-228. 351–353 (SPF) contributes to the (6S)-5,6,7,8-tetrahydrofolate binding site.

The protein belongs to the SHMT family. In terms of assembly, homodimer. It depends on pyridoxal 5'-phosphate as a cofactor.

The protein localises to the cytoplasm. The enzyme catalyses (6R)-5,10-methylene-5,6,7,8-tetrahydrofolate + glycine + H2O = (6S)-5,6,7,8-tetrahydrofolate + L-serine. It functions in the pathway one-carbon metabolism; tetrahydrofolate interconversion. The protein operates within amino-acid biosynthesis; glycine biosynthesis; glycine from L-serine: step 1/1. Catalyzes the reversible interconversion of serine and glycine with tetrahydrofolate (THF) serving as the one-carbon carrier. This reaction serves as the major source of one-carbon groups required for the biosynthesis of purines, thymidylate, methionine, and other important biomolecules. Also exhibits THF-independent aldolase activity toward beta-hydroxyamino acids, producing glycine and aldehydes, via a retro-aldol mechanism. The polypeptide is Serine hydroxymethyltransferase (Clostridium botulinum (strain Eklund 17B / Type B)).